The primary structure comprises 245 residues: Putative MSV199 domain-containing protein 146R (245 aa).

In terms of domain architecture, GIY-YIG spans Arg-2–Leu-97.

In Acheta domesticus (House cricket), this protein is Putative MSV199 domain-containing protein 146R.